A 182-amino-acid chain; its full sequence is Oligoribonuclease (182 aa).

One can recognise an Exonuclease domain in the interval 7-170 (LIWIDLEMTG…EDIRESVEEL (164 aa)). Tyrosine 128 is a catalytic residue.

Belongs to the oligoribonuclease family.

The protein localises to the cytoplasm. Functionally, 3'-to-5' exoribonuclease specific for small oligoribonucleotides. The protein is Oligoribonuclease of Hahella chejuensis (strain KCTC 2396).